The sequence spans 419 residues: Tyrosine--tRNA ligase (419 aa).

An L-tyrosine-binding site is contributed by tyrosine 34. The 'HIGH' region motif lies at 39-48 (PSGDSMHIGH). The L-tyrosine site is built by tyrosine 168 and glutamine 172. Positions 230–234 (KFGKS) match the 'KMSKS' region motif. Lysine 233 serves as a coordination point for ATP. One can recognise an S4 RNA-binding domain in the interval 352–418 (ANLVDWLVTL…GKKKYFLVSY (67 aa)).

Belongs to the class-I aminoacyl-tRNA synthetase family. TyrS type 1 subfamily. In terms of assembly, homodimer.

The protein resides in the cytoplasm. The enzyme catalyses tRNA(Tyr) + L-tyrosine + ATP = L-tyrosyl-tRNA(Tyr) + AMP + diphosphate + H(+). Its function is as follows. Catalyzes the attachment of tyrosine to tRNA(Tyr) in a two-step reaction: tyrosine is first activated by ATP to form Tyr-AMP and then transferred to the acceptor end of tRNA(Tyr). The sequence is that of Tyrosine--tRNA ligase from Listeria monocytogenes serotype 4a (strain HCC23).